The sequence spans 214 residues: Putative F-box protein At3g58910 (214 aa).

One can recognise an F-box domain in the interval 1 to 47 (MDRVSSLPDELLCHILSFLTTKETALTSLLSKREIIPLIKSVVFPTL).

This is Putative F-box protein At3g58910 from Arabidopsis thaliana (Mouse-ear cress).